A 105-amino-acid polypeptide reads, in one-letter code: Mini zinc finger protein 1 (105 aa).

Residues 1-29 are disordered; it reads MGPQQDRSAAKPYANGSTAAAAAAGRKEN. Residues 35–84 form a ZF-HD dimerization-type; degenerate zinc finger; sequence YRECQRNHAASIGGHAVDGCREFMASGAEGTAAALLCAACGCHRSFHRRE.

As to quaternary structure, homo- and heterodimers.

Its subcellular location is the cytoplasm. Inhibits zinc finger homeodomain (ZHD) transcription factors, by interacting with them to prevent both their nuclear localization and their DNA-binding properties. This Oryza sativa subsp. indica (Rice) protein is Mini zinc finger protein 1 (MIF1).